Here is a 284-residue protein sequence, read N- to C-terminus: Bifunctional protein FolD (284 aa).

NADP(+) is bound by residues 165 to 167, threonine 192, and valine 233; that span reads GRG.

The protein belongs to the tetrahydrofolate dehydrogenase/cyclohydrolase family. In terms of assembly, homodimer.

The catalysed reaction is (6R)-5,10-methylene-5,6,7,8-tetrahydrofolate + NADP(+) = (6R)-5,10-methenyltetrahydrofolate + NADPH. The enzyme catalyses (6R)-5,10-methenyltetrahydrofolate + H2O = (6R)-10-formyltetrahydrofolate + H(+). The protein operates within one-carbon metabolism; tetrahydrofolate interconversion. Its function is as follows. Catalyzes the oxidation of 5,10-methylenetetrahydrofolate to 5,10-methenyltetrahydrofolate and then the hydrolysis of 5,10-methenyltetrahydrofolate to 10-formyltetrahydrofolate. The protein is Bifunctional protein FolD of Corynebacterium efficiens (strain DSM 44549 / YS-314 / AJ 12310 / JCM 11189 / NBRC 100395).